The chain runs to 229 residues: Potassium/proton antiporter CemA (229 aa).

Transmembrane regions (helical) follow at residues 7–27 (FTPLFYLSFIVFLPWWISFSF), 114–134 (LICFVILSGYSIWGNENLVIL), and 189–209 (ILSGLVSTFPVILDTILKYWI).

This sequence belongs to the CemA family.

Its subcellular location is the plastid. It localises to the chloroplast inner membrane. The catalysed reaction is K(+)(in) + H(+)(out) = K(+)(out) + H(+)(in). Functionally, contributes to K(+)/H(+) antiport activity by supporting proton efflux to control proton extrusion and homeostasis in chloroplasts in a light-dependent manner to modulate photosynthesis. Prevents excessive induction of non-photochemical quenching (NPQ) under continuous-light conditions. Indirectly promotes efficient inorganic carbon uptake into chloroplasts. The chain is Potassium/proton antiporter CemA from Ipomoea purpurea (Common morning glory).